Consider the following 396-residue polypeptide: Elongation factor Tu (396 aa).

Positions 10-206 (KPHVNVGTIG…ALDSYIPEPE (197 aa)) constitute a tr-type G domain. The G1 stretch occupies residues 19 to 26 (GHVDHGKT). Position 19-26 (19-26 (GHVDHGKT)) interacts with GTP. Threonine 26 is a Mg(2+) binding site. A G2 region spans residues 60–64 (GITIN). Positions 81–84 (DCPG) are G3. GTP-binding positions include 81 to 85 (DCPGH) and 136 to 139 (NKAD). A G4 region spans residues 136–139 (NKAD). A G5 region spans residues 174–176 (SAL).

The protein belongs to the TRAFAC class translation factor GTPase superfamily. Classic translation factor GTPase family. EF-Tu/EF-1A subfamily. Monomer.

Its subcellular location is the cytoplasm. It carries out the reaction GTP + H2O = GDP + phosphate + H(+). GTP hydrolase that promotes the GTP-dependent binding of aminoacyl-tRNA to the A-site of ribosomes during protein biosynthesis. This is Elongation factor Tu from Nitrosomonas europaea (strain ATCC 19718 / CIP 103999 / KCTC 2705 / NBRC 14298).